A 308-amino-acid chain; its full sequence is MAASWQWENATAGAVAGFATVAAMHSLDVVRTRFQVNDGRGSSLPTYKNTAHAVFTIARLEGLRGLYAGFFPAVIGSTVSWGLYFFFYGRAKQRYARGRDDEKLSPALHLASAAEAGALVCLCTNPIWLVKTRLQLQTPLHQTQPYSGLLDAFRTIVKEEGPRALYKGIVPGLVLVSHGAIQFTAYEELRKIIVDLKERRRKSESTDNLLNSADYAALGGSSKVAAVLLTYPFQVIRARLQQRPSTNGIPRYIDSLHVIRETARYEGLRGFYRGLTANLLKNVPASSITFIVYENVLKLLKQHPTTKD.

Solcar repeat units follow at residues 4–94, 104–192, and 213–299; these read SWQW…AKQR, LSPA…LRKI, and ADYA…VLKL. The next 6 membrane-spanning stretches (helical) occupy residues 10-30, 74-91, 110-130, 164-184, 216-236, and 274-293; these read ATAGAVAGFATVAAMHSLDVV, VIGSTVSWGLYFFFYGRA, LASAAEAGALVCLCTNPIWLV, ALYKGIVPGLVLVSHGAIQFT, AALGGSSKVAAVLLTYPFQVI, and GLTANLLKNVPASSITFIVY.

This sequence belongs to the mitochondrial carrier (TC 2.A.29) family. In terms of tissue distribution, ubiquitous.

Its subcellular location is the plastid. It localises to the chloroplast membrane. In terms of biological role, mediates folate import into chloroplast. The polypeptide is Folate transporter 1, chloroplastic (FOLT1) (Arabidopsis thaliana (Mouse-ear cress)).